The following is a 333-amino-acid chain: Adenosine deaminase (333 aa).

The Zn(2+) site is built by His12 and His14. Residues His14, Asp16, and Gly170 each coordinate substrate. Zn(2+) is bound at residue His197. Glu200 serves as the catalytic Proton donor. Asp278 serves as a coordination point for Zn(2+). Residue Asp279 participates in substrate binding.

This sequence belongs to the metallo-dependent hydrolases superfamily. Adenosine and AMP deaminases family. Adenosine deaminase subfamily. Zn(2+) is required as a cofactor.

The enzyme catalyses adenosine + H2O + H(+) = inosine + NH4(+). The catalysed reaction is 2'-deoxyadenosine + H2O + H(+) = 2'-deoxyinosine + NH4(+). Catalyzes the hydrolytic deamination of adenosine and 2-deoxyadenosine. The chain is Adenosine deaminase from Salmonella agona (strain SL483).